A 386-amino-acid chain; its full sequence is Cell division protein FtsZ (386 aa).

GTP-binding positions include 18–22 (GGGVN), 105–107 (GTG), glutamate 136, arginine 140, and aspartate 184.

Belongs to the FtsZ family. As to quaternary structure, homodimer. Polymerizes to form a dynamic ring structure in a strictly GTP-dependent manner. Interacts directly with several other division proteins.

Its subcellular location is the cytoplasm. Its function is as follows. Essential cell division protein that forms a contractile ring structure (Z ring) at the future cell division site. The regulation of the ring assembly controls the timing and the location of cell division. One of the functions of the FtsZ ring is to recruit other cell division proteins to the septum to produce a new cell wall between the dividing cells. Binds GTP and shows GTPase activity. This chain is Cell division protein FtsZ, found in Mycobacterium kansasii.